Here is a 1700-residue protein sequence, read N- to C-terminus: A-kinase anchor protein SPHKAP (1700 aa).

Disordered stretches follow at residues 364-385 (SNLN…QDGE), 742-778 (IRRR…SNSH), and 793-885 (SKQD…NTQE). Positions 768–778 (SSSSSPLSNSH) are enriched in low complexity. Residues 822–831 (DSSTATTSSK) are compositionally biased toward polar residues. Residues 839 to 855 (AGEDTKSPHHSENECRA) show a composition bias toward basic and acidic residues. Positions 857–873 (SEGQRSPTVSQSRSGSQ) are enriched in polar residues. The segment at 929 to 946 (FAEELADTVVSMATEIAA) is PKA-RII subunit binding domain. Positions 980–1006 (KRKKESQGSGTAVRKHKPPRLSEIKRK) are disordered. Residues S1025, S1085, S1107, S1120, S1121, S1124, S1259, and S1288 each carry the phosphoserine modification. Disordered regions lie at residues 1374–1414 (DSVT…PVPI), 1481–1535 (IHSD…DTSS), and 1585–1604 (GQSE…TASP). A compositionally biased stretch (polar residues) spans 1383–1398 (PVSSLSKTASLTNHSP). Polar residues predominate over residues 1586-1604 (QSESTEAPASGPPTGTASP).

The protein belongs to the AKAP110 family. Interacts (via the PKA-RII subunit binding domain) with the RI subunit of PKA. Interacts with SPHK1; the interaction greatly reduces SPHK1 activity. As to expression, highly expressed in heart. Both isoforms abundantly expressed in ventricle. Also expressed in spleen, ovary and brain.

The protein resides in the cytoplasm. In terms of biological role, anchoring protein that binds preferentially to the type I regulatory subunit of c-AMP-dependent protein kinase (PKA type I) and targets it to distinct subcellular compartments. May act as a converging factor linking cAMP and sphingosine signaling pathways. Plays a regulatory role in the modulation of SPHK1. The polypeptide is A-kinase anchor protein SPHKAP (SPHKAP) (Homo sapiens (Human)).